The sequence spans 492 residues: Glutamyl-tRNA(Gln) amidotransferase subunit B, mitochondrial (492 aa).

Belongs to the GatB/GatE family. GatB subfamily. Subunit of the heterotrimeric GatFAB amidotransferase (AdT) complex, composed of A, B and F subunits.

The protein resides in the mitochondrion. The catalysed reaction is L-glutamyl-tRNA(Gln) + L-glutamine + ATP + H2O = L-glutaminyl-tRNA(Gln) + L-glutamate + ADP + phosphate + H(+). In terms of biological role, allows the formation of correctly charged Gln-tRNA(Gln) through the transamidation of misacylated Glu-tRNA(Gln) in the mitochondria. The reaction takes place in the presence of glutamine and ATP through an activated gamma-phospho-Glu-tRNA(Gln). The sequence is that of Glutamyl-tRNA(Gln) amidotransferase subunit B, mitochondrial from Komagataella phaffii (strain GS115 / ATCC 20864) (Yeast).